The chain runs to 147 residues: Large ribosomal subunit protein uL16 (147 aa).

Belongs to the universal ribosomal protein uL16 family. In terms of assembly, part of the 50S ribosomal subunit.

In terms of biological role, binds 23S rRNA and is also seen to make contacts with the A and possibly P site tRNAs. The protein is Large ribosomal subunit protein uL16 of Caldicellulosiruptor bescii (strain ATCC BAA-1888 / DSM 6725 / KCTC 15123 / Z-1320) (Anaerocellum thermophilum).